A 283-amino-acid chain; its full sequence is Pantothenate synthetase (283 aa).

Met30–His37 is an ATP binding site. Residue His37 is the Proton donor of the active site. Position 61 (Gln61) interacts with (R)-pantoate. Gln61 provides a ligand contact to beta-alanine. Gly149 to Asp152 contacts ATP. A (R)-pantoate-binding site is contributed by Gln155. Leu186–Arg189 is an ATP binding site.

It belongs to the pantothenate synthetase family. As to quaternary structure, homodimer.

It localises to the cytoplasm. It catalyses the reaction (R)-pantoate + beta-alanine + ATP = (R)-pantothenate + AMP + diphosphate + H(+). It participates in cofactor biosynthesis; (R)-pantothenate biosynthesis; (R)-pantothenate from (R)-pantoate and beta-alanine: step 1/1. Its function is as follows. Catalyzes the condensation of pantoate with beta-alanine in an ATP-dependent reaction via a pantoyl-adenylate intermediate. This is Pantothenate synthetase from Escherichia coli O6:H1 (strain CFT073 / ATCC 700928 / UPEC).